The chain runs to 425 residues: UPF0229 protein SG1344 (425 aa).

The interval 49 to 109 (GESVSIPNTD…GQGSVSQDGE (61 aa)) is disordered. The segment covering 50–59 (ESVSIPNTDI) has biased composition (polar residues). Positions 77–90 (PGNDHFVQNDRIER) are enriched in basic and acidic residues.

The protein belongs to the UPF0229 family.

This is UPF0229 protein SG1344 from Sodalis glossinidius (strain morsitans).